The primary structure comprises 389 residues: Pyruvate synthase subunit PorA (389 aa).

Heterotetramer of one alpha, one beta, one delta and one gamma chain.

It carries out the reaction 2 oxidized [2Fe-2S]-[ferredoxin] + pyruvate + CoA = 2 reduced [2Fe-2S]-[ferredoxin] + acetyl-CoA + CO2 + H(+). In Methanocaldococcus jannaschii (strain ATCC 43067 / DSM 2661 / JAL-1 / JCM 10045 / NBRC 100440) (Methanococcus jannaschii), this protein is Pyruvate synthase subunit PorA (porA).